Consider the following 530-residue polypeptide: AarF domain-containing protein kinase 1 (530 aa).

Residues 155-467 (SFDDTPLGTA…ASSFLNMSRC (313 aa)) enclose the Protein kinase domain. ATP is bound by residues 161–169 (LGTASLAQV) and K183. D315 acts as the Proton acceptor in catalysis.

This sequence belongs to the protein kinase superfamily. ADCK protein kinase family.

The protein resides in the mitochondrion. Appears to be essential for maintaining mitochondrial cristae formation and mitochondrial function by acting via YME1L1 in a kinase-independent manner to regulate essential mitochondrial structural proteins OPA1 and IMMT. The action of this enzyme is not yet clear. It is not known if it has protein kinase activity and what type of substrate it would phosphorylate (Ser, Thr or Tyr). The sequence is that of AarF domain-containing protein kinase 1 from Homo sapiens (Human).